A 187-amino-acid polypeptide reads, in one-letter code: Adenine phosphoribosyltransferase (187 aa).

Belongs to the purine/pyrimidine phosphoribosyltransferase family. In terms of assembly, homodimer.

It localises to the cytoplasm. It catalyses the reaction AMP + diphosphate = 5-phospho-alpha-D-ribose 1-diphosphate + adenine. It functions in the pathway purine metabolism; AMP biosynthesis via salvage pathway; AMP from adenine: step 1/1. Catalyzes a salvage reaction resulting in the formation of AMP, that is energically less costly than de novo synthesis. In Burkholderia pseudomallei (strain 1106a), this protein is Adenine phosphoribosyltransferase.